A 180-amino-acid chain; its full sequence is Ribulose bisphosphate carboxylase small subunit, chloroplastic 3 (180 aa).

Residues 1–56 (MASMISSSAVTTVSRASTVQSAAVAPFGGLKSMTGFPVKKVNTDITSITSNGGRVK) constitute a chloroplast transit peptide.

Belongs to the RuBisCO small chain family. As to quaternary structure, heterohexadecamer of 8 large and 8 small subunits.

It localises to the plastid. Its subcellular location is the chloroplast. RuBisCO catalyzes two reactions: the carboxylation of D-ribulose 1,5-bisphosphate, the primary event in carbon dioxide fixation, as well as the oxidative fragmentation of the pentose substrate. Both reactions occur simultaneously and in competition at the same active site. Although the small subunit is not catalytic it is essential for maximal activity. Binds to abscisic acid (ABA); only half of the possible binding sites are occupied in the crystal; and there are indications this is a low affinity site. This is Ribulose bisphosphate carboxylase small subunit, chloroplastic 3 (RBCS.3A) from Pisum sativum (Garden pea).